Here is a 517-residue protein sequence, read N- to C-terminus: 2-isopropylmalate synthase (517 aa).

Positions 5–267 constitute a Pyruvate carboxyltransferase domain; sequence VIIFDTTLRD…HTNVRCQEIY (263 aa). The Mn(2+) site is built by aspartate 14, histidine 202, histidine 204, and asparagine 238. The interval 392-517 is regulatory domain; the sequence is RLKCFHVDSS…QRKYIKKNNN (126 aa).

The protein belongs to the alpha-IPM synthase/homocitrate synthase family. LeuA type 1 subfamily. Homodimer. It depends on Mn(2+) as a cofactor.

The protein localises to the cytoplasm. It carries out the reaction 3-methyl-2-oxobutanoate + acetyl-CoA + H2O = (2S)-2-isopropylmalate + CoA + H(+). It functions in the pathway amino-acid biosynthesis; L-leucine biosynthesis; L-leucine from 3-methyl-2-oxobutanoate: step 1/4. Catalyzes the condensation of the acetyl group of acetyl-CoA with 3-methyl-2-oxobutanoate (2-ketoisovalerate) to form 3-carboxy-3-hydroxy-4-methylpentanoate (2-isopropylmalate). The protein is 2-isopropylmalate synthase of Blochmanniella pennsylvanica (strain BPEN).